The chain runs to 393 residues: MPKDDHTGATADRTAQPTGTGKQPLVPGQPGAAPVQPGRVNFFTRIALSQRLHEIFERLPLMNRVTRREGEALFDIVSGFVQSQVLLAIVEFRVLHILAGASWPLPQLAERTGLAEDRLAVLMQAAAALKLVKFRRGLWQLAPRGAAFITVPGLEAMVRHHPVLYRDLADPVAFLKGDIEPELAGFWPYVFGPLAQEDAGLAERYSQLMADSQRVVADDTLRLVDLRDAKRVMDVGGGTGAFLRVVAKLYPELPLTLFDLPHVLSVADRFSPKLDFAPGSFRDDPIPQGADVITLVRVLYDHPDSVVEPLLAKVHAALPPGGRLIISEAMAGGAKPDRACDVYFAFYTMAMSSGRTRSPEEIKQMLEKAGFTKVSKPRTLRPFITSVIEAERG.

A disordered region spans residues 1–36; it reads MPKDDHTGATADRTAQPTGTGKQPLVPGQPGAAPVQ. Residues 26-36 are compositionally biased toward low complexity; the sequence is VPGQPGAAPVQ. Residues Asp259 and Arg297 each contribute to the S-adenosyl-L-methionine site.

The protein belongs to the class I-like SAM-binding methyltransferase superfamily. Cation-independent O-methyltransferase family.

The enzyme catalyses demethylspheroidene + S-adenosyl-L-methionine = spheroidene + S-adenosyl-L-homocysteine + H(+). The protein operates within carotenoid biosynthesis; spheroidene biosynthesis. Functionally, methyltransferase that mediates the O-methylation of 1-hydroxy carotenoids. Converts hydroxyneurosporene to methoxyneurosporene or demethylspheroidene to spheroidene. Also able to produce spirilloxanthin. The polypeptide is Demethylspheroidene O-methyltransferase (crtF) (Rhodobacter capsulatus (strain ATCC BAA-309 / NBRC 16581 / SB1003)).